The following is a 128-amino-acid chain: Glycine cleavage system H protein (128 aa).

The region spanning 22-104 (TVLVGITDYA…YGEGWIFRLK (83 aa)) is the Lipoyl-binding domain. At Lys-63 the chain carries N6-lipoyllysine.

It belongs to the GcvH family. The glycine cleavage system is composed of four proteins: P, T, L and H. Monomer. Requires (R)-lipoate as cofactor.

The glycine cleavage system catalyzes the degradation of glycine. The H protein shuttles the methylamine group of glycine from the P protein to the T protein. This Thermus thermophilus (strain ATCC 27634 / DSM 579 / HB8) protein is Glycine cleavage system H protein.